A 213-amino-acid chain; its full sequence is Heavy metal-binding protein HIP (213 aa).

Positions 80-213 constitute a C1q domain; it reads FKSHHVAFSA…MSTFTGFMLH (134 aa).

In terms of tissue distribution, pallium, gill and liver.

Its subcellular location is the secreted. Binds heavy metals. May function as a carrier of divalent cations in plasma. This chain is Heavy metal-binding protein HIP, found in Mytilus edulis (Blue mussel).